Consider the following 190-residue polypeptide: Lipid A acyltransferase PagP (190 aa).

The signal sequence occupies residues 1 to 18; the sequence is MKRLISCLTIICALNASA. Active-site residues include His60, Asp103, and Ser104.

It belongs to the lipid A palmitoyltransferase family. In terms of assembly, homodimer.

It localises to the cell outer membrane. The catalysed reaction is a lipid A + a 1,2-diacyl-sn-glycero-3-phosphocholine = a hepta-acyl lipid A + a 2-acyl-sn-glycero-3-phosphocholine. It catalyses the reaction a lipid IVA + a 1,2-diacyl-sn-glycero-3-phosphocholine = a lipid IVB + a 2-acyl-sn-glycero-3-phosphocholine. The enzyme catalyses a lipid IIA + a 1,2-diacyl-sn-glycero-3-phosphocholine = a lipid IIB + a 2-acyl-sn-glycero-3-phosphocholine. Transfers a fatty acid residue from the sn-1 position of a phospholipid to the N-linked hydroxyfatty acid chain on the proximal unit of lipid A or its precursors. In Legionella pneumophila serogroup 1 (strain 2300/99 Alcoy), this protein is Lipid A acyltransferase PagP.